We begin with the raw amino-acid sequence, 185 residues long: Signal peptidase I (185 aa).

Topologically, residues 1-20 are cytoplasmic; the sequence is MKSEKEKTSKKSAVLDWAKA. The helical transmembrane segment at 21–41 threads the bilayer; it reads IIIAVVLAVLIRNFLFAPYVV. At 42-185 the chain is on the extracellular side; that stretch reads DGESMEPTLH…FPFNEIRKTK (144 aa). Active-site residues include Ser45 and Lys85.

Belongs to the peptidase S26 family.

Its subcellular location is the cell membrane. It catalyses the reaction Cleavage of hydrophobic, N-terminal signal or leader sequences from secreted and periplasmic proteins.. The chain is Signal peptidase I (sipA) from Bacillus amyloliquefaciens (Bacillus velezensis).